The sequence spans 215 residues: MSKLADLRQEYARAELSRDHVTDDPIEQFRAWFDEAEDAELEEPNAMTLATAATDGTPSARIVLLKGLDDRGFHFYTNYESRKGTDLSQNPHAALVFLWKPLERQVRIEGTVERLPAEESTEYFHRRPRGAQMGAWASPQSRVVDSRADLEENLDTVKAEYGDEDEIPRPSHWGGYVVRPTEVEFWQGRPNRLHDRLRYRRSDPAGDWTLERLAP.

Substrate-binding positions include 8-11 (RQEY) and Lys66. FMN-binding positions include 61–66 (RIVLLK), 76–77 (YT), Arg82, Lys83, and Gln105. Substrate-binding residues include Tyr123 and Arg127. Residues 140 to 141 (QS) and Trp186 each bind FMN. 192–194 (RLH) contributes to the substrate binding site. Arg196 provides a ligand contact to FMN.

The protein belongs to the pyridoxamine 5'-phosphate oxidase family. Homodimer. Requires FMN as cofactor.

It catalyses the reaction pyridoxamine 5'-phosphate + O2 + H2O = pyridoxal 5'-phosphate + H2O2 + NH4(+). The catalysed reaction is pyridoxine 5'-phosphate + O2 = pyridoxal 5'-phosphate + H2O2. It functions in the pathway cofactor metabolism; pyridoxal 5'-phosphate salvage; pyridoxal 5'-phosphate from pyridoxamine 5'-phosphate: step 1/1. It participates in cofactor metabolism; pyridoxal 5'-phosphate salvage; pyridoxal 5'-phosphate from pyridoxine 5'-phosphate: step 1/1. Catalyzes the oxidation of either pyridoxine 5'-phosphate (PNP) or pyridoxamine 5'-phosphate (PMP) into pyridoxal 5'-phosphate (PLP). The protein is Pyridoxine/pyridoxamine 5'-phosphate oxidase of Salinibacter ruber (strain DSM 13855 / M31).